The chain runs to 379 residues: Inactive deoxyhypusine synthase (379 aa).

The disordered stretch occupies residues 1 to 48 (MLASVPAPRPAKKDSAASRRKSASKSTGAAVKDGSSARVSASGAAESP). Over residues 36-47 (SARVSASGAAES) the composition is skewed to low complexity. Residues 115 to 119 (SNMIS), 141 to 143 (SAG), glutamate 147, and aspartate 256 each bind NAD(+). 146 to 147 (EE) contacts spermidine. Aspartate 261 provides a ligand contact to spermidine. Glycine 302 provides a ligand contact to NAD(+). Histidine 307 lines the spermidine pocket. 323–324 (TG) is a binding site for NAD(+). Residues 329-331 (GCV) and 338-344 (DDVACGL) each bind spermidine. Residue 357–358 (DA) coordinates NAD(+).

The protein belongs to the deoxyhypusine synthase family.

The protein is Inactive deoxyhypusine synthase of Leishmania donovani.